We begin with the raw amino-acid sequence, 204 residues long: Somatotropin (204 aa).

The first 17 residues, 1 to 17 (MDRVVLMLSVMSLGVSS), serve as a signal peptide directing secretion. Residue Q18 is modified to Pyrrolidone carboxylic acid. Position 36 (H36) interacts with Zn(2+). The cysteines at positions 69 and 177 are disulfide-linked. Residue E186 coordinates Zn(2+). Residues C194 and C202 are joined by a disulfide bond.

Belongs to the somatotropin/prolactin family.

Its subcellular location is the secreted. Functionally, growth hormone plays an important role in growth control and is involved in the regulation of several anabolic processes. Implicated as an osmoregulatory substance important for seawater adaptation. This is Somatotropin (gh) from Sparus aurata (Gilthead sea bream).